We begin with the raw amino-acid sequence, 430 residues long: 3-oxo-tetronate kinase (430 aa).

ATP is bound by residues Ser268, 366-369 (GGET), and Gly410.

The protein belongs to the four-carbon acid sugar kinase family.

It carries out the reaction 3-dehydro-L-erythronate + ATP = 3-dehydro-4-O-phospho-L-erythronate + ADP + H(+). The enzyme catalyses 3-dehydro-D-erythronate + ATP = 3-dehydro-4-O-phospho-D-erythronate + ADP + H(+). Its function is as follows. Catalyzes the ATP-dependent phosphorylation of 3-oxo-tetronate to 3-oxo-tetronate 4-phosphate. This Pseudomonas fluorescens (strain ATCC BAA-477 / NRRL B-23932 / Pf-5) protein is 3-oxo-tetronate kinase.